Reading from the N-terminus, the 316-residue chain is Olfactory receptor 4N4 (316 aa).

Residues 1–25 (MKIANNTVVTEFILLGLTQSQDIQL) lie on the Extracellular side of the membrane. Asn-5 carries N-linked (GlcNAc...) asparagine glycosylation. Residues 26–49 (LVFVLILIFYLIILPGNFLIIFTI) traverse the membrane as a helical segment. Residues 50–57 (RSDPGLTA) lie on the Cytoplasmic side of the membrane. Residues 58 to 79 (PLYLFLGNLAFLDASYSFIVAP) form a helical membrane-spanning segment. Over 80 to 100 (RMLVDFLSEKKVISYRGCITQ) the chain is Extracellular. Cys-97 and Cys-189 are oxidised to a cystine. Residues 101–120 (LFFLHFLGGGEGLLLVVMAF) form a helical membrane-spanning segment. Residues 121-139 (DRYIAICRPLHCSTVMNPR) lie on the Cytoplasmic side of the membrane. A helical transmembrane segment spans residues 140 to 158 (ACYAMMLALWLGGFVHSII). Over 159-195 (QVVLILRLPFCGPNQLDNFFCDVRQVIKLACTDMFVV) the chain is Extracellular. The helical transmembrane segment at 196-219 (ELLMVFNSGLMTLLCFLGLLASYA) threads the bilayer. The Cytoplasmic segment spans residues 220–235 (VILCHVRRAASEGKNK). A helical membrane pass occupies residues 236-258 (AMSTCTTRVIIILLMFGPAIFIY). Residues 259–269 (MCPFRALPADK) are Extracellular-facing. The helical transmembrane segment at 270 to 289 (MVSLFHTVIFPLMNPMIYTL) threads the bilayer. Residues 290 to 316 (RNQEVKTSMKRLLSRHVVCQVDFIIRN) are Cytoplasmic-facing.

It belongs to the G-protein coupled receptor 1 family.

Its subcellular location is the cell membrane. Functionally, odorant receptor. The polypeptide is Olfactory receptor 4N4 (OR4N4) (Homo sapiens (Human)).